A 73-amino-acid chain; its full sequence is MLHLIKMVSKIVLLITLVFIVSAVTGSDTWVGECDYACENGKNAIDACCSQKGYAPRGYCPNGMHARCQYSVI.

An N-terminal signal peptide occupies residues 1–23 (MLHLIKMVSKIVLLITLVFIVSA).

This is an uncharacterized protein from Acheta domesticus (House cricket).